A 136-amino-acid chain; its full sequence is UPF0225 protein Pnap_0466 (136 aa).

This sequence belongs to the UPF0225 family.

The chain is UPF0225 protein Pnap_0466 from Polaromonas naphthalenivorans (strain CJ2).